We begin with the raw amino-acid sequence, 298 residues long: UPF0282 protein Kcr_0286 (298 aa).

It belongs to the UPF0282 family.

This Korarchaeum cryptofilum (strain OPF8) protein is UPF0282 protein Kcr_0286.